Here is a 205-residue protein sequence, read N- to C-terminus: Probable GTP-binding protein EngB (205 aa).

The EngB-type G domain occupies 27 to 201 (SGIEIAFAGR…AAKLDSWFAP (175 aa)). Residues 35-42 (GRSNAGKS), 62-66 (GRTQL), 80-83 (DLPG), 147-150 (TKAD), and 180-182 (FSA) each bind GTP. Residues Ser42 and Thr64 each contribute to the Mg(2+) site.

It belongs to the TRAFAC class TrmE-Era-EngA-EngB-Septin-like GTPase superfamily. EngB GTPase family. Requires Mg(2+) as cofactor.

Necessary for normal cell division and for the maintenance of normal septation. This chain is Probable GTP-binding protein EngB, found in Pasteurella multocida (strain Pm70).